Reading from the N-terminus, the 329-residue chain is Delta(7)-sterol 5(6)-desaturase erg32 (329 aa).

The next 2 helical transmembrane spans lie at 67-87 and 149-169; these read LFLITWIMGTLSYFLSASFAY and FYLFFSIALFLLFSDFLIYWI. In terms of domain architecture, Fatty acid hydroxylase spans 156–281; it reads ALFLLFSDFL…FFTLFDRLCS (126 aa). Residues 170–175 carry the Histidine box-1 motif; it reads HRALHH. Positions 183 to 187 match the Histidine box-2 motif; sequence HKLHH. The helical transmembrane segment at 210–230 threads the bilayer; sequence LPYHMFPFFFPLNKYVYLLLF. The Histidine box-3 signature appears at 257-262; sequence HHAAHH.

This sequence belongs to the sterol desaturase family. Fe cation serves as cofactor.

Its subcellular location is the endoplasmic reticulum membrane. The protein localises to the golgi apparatus membrane. The enzyme catalyses episterol + 2 Fe(II)-[cytochrome b5] + O2 + 2 H(+) = 5-dehydroepisterol + 2 Fe(III)-[cytochrome b5] + 2 H2O. Its pathway is steroid metabolism; ergosterol biosynthesis. Functionally, C-5 sterol desaturase; part of the third module of ergosterol biosynthesis pathway that includes by the late steps of the pathway. Erg31 and erg32 catalyze the introduction of a C-5 double bond in the B ring to produce 5-dehydroepisterol. The third module or late pathway involves the ergosterol synthesis itself through consecutive reactions that mainly occur in the endoplasmic reticulum (ER) membrane. Firstly, the squalene synthase erg9 catalyzes the condensation of 2 farnesyl pyrophosphate moieties to form squalene, which is the precursor of all steroids. Secondly, squalene is converted into lanosterol by the consecutive action of the squalene epoxidase erg1 and the lanosterol synthase erg7. The lanosterol 14-alpha-demethylase erg11/cyp1 catalyzes C14-demethylation of lanosterol to produce 4,4'-dimethyl cholesta-8,14,24-triene-3-beta-ol. In the next steps, a complex process involving various demethylation, reduction and desaturation reactions catalyzed by the C-14 reductase erg24 and the C-4 demethylation complex erg25-erg26-erg27 leads to the production of zymosterol. Erg28 likely functions in the C-4 demethylation complex reaction by tethering erg26 and Erg27 to the endoplasmic reticulum or to facilitate interaction between these proteins. Then, the sterol 24-C-methyltransferase erg6 catalyzes the methyl transfer from S-adenosyl-methionine to the C-24 of zymosterol to form fecosterol. The C-8 sterol isomerase erg2 catalyzes the reaction which results in unsaturation at C-7 in the B ring of sterols and thus converts fecosterol to episterol. The sterol-C5-desaturases erg31 and erg32 then catalyze the introduction of a C-5 double bond in the B ring to produce 5-dehydroepisterol. The C-22 sterol desaturase erg5 further converts 5-dehydroepisterol into ergosta-5,7,22,24(28)-tetraen-3beta-ol by forming the C-22(23) double bond in the sterol side chain. Finally, ergosta-5,7,22,24(28)-tetraen-3beta-ol is substrate of the C-24(28) sterol reductase erg4 to produce ergosterol. In the genus Schizosaccharomyces, a second route exists between lanosterol and fecosterol, via the methylation of lanosterol to eburicol by erg6, followed by C14-demethylation by erg11/cyp1 and C4-demethylation by the demethylation complex erg25-erg26-erg27. This Schizosaccharomyces pombe (strain 972 / ATCC 24843) (Fission yeast) protein is Delta(7)-sterol 5(6)-desaturase erg32.